Here is a 32-residue protein sequence, read N- to C-terminus: Delta-conotoxin-like CnVID (32 aa).

Cystine bridges form between Cys3–Cys18, Cys10–Cys22, and Cys17–Cys27. 4-hydroxyproline is present on residues Pro6 and Pro14.

It belongs to the conotoxin O1 superfamily. Expressed by the venom duct.

Its subcellular location is the secreted. Delta-conotoxins bind to site 6 of voltage-gated sodium channels (Nav) and inhibit the inactivation process. This toxin acts on Nav1.2/SCN2A, Nav1.3/SCN3A and Nav1.6/SCN8A (EC(50)=1.7 uM). This is Delta-conotoxin-like CnVID from Conus consors (Singed cone).